The primary structure comprises 704 residues: Elongation factor G (704 aa).

A tr-type G domain is found at 8–290 (EKYRNIGICA…GVVRYLPAPN (283 aa)). Residues 17–24 (AHVDAGKT), 88–92 (DTPGH), and 142–145 (NKMD) contribute to the GTP site.

This sequence belongs to the TRAFAC class translation factor GTPase superfamily. Classic translation factor GTPase family. EF-G/EF-2 subfamily.

It is found in the cytoplasm. Functionally, catalyzes the GTP-dependent ribosomal translocation step during translation elongation. During this step, the ribosome changes from the pre-translocational (PRE) to the post-translocational (POST) state as the newly formed A-site-bound peptidyl-tRNA and P-site-bound deacylated tRNA move to the P and E sites, respectively. Catalyzes the coordinated movement of the two tRNA molecules, the mRNA and conformational changes in the ribosome. This chain is Elongation factor G, found in Francisella tularensis subsp. holarctica (strain LVS).